The sequence spans 272 residues: Methylesterase 8 (272 aa).

The active-site Acyl-ester intermediate is Ser102. Active-site charge relay system residues include Asp222 and His250.

Belongs to the AB hydrolase superfamily. Methylesterase family.

Functionally, methylesterase shown to have carboxylesterase activity in vitro. The protein is Methylesterase 8 of Arabidopsis thaliana (Mouse-ear cress).